Reading from the N-terminus, the 406-residue chain is Putative ankyrin repeat protein RF_0266 (406 aa).

ANK repeat units lie at residues 68 to 98 (TSHS…DINN), 103 to 129 (NYIT…QDDI), 130 to 161 (KVQN…IIKP), 163 to 189 (HIEL…DIEK), and 203 to 232 (SIDC…KPEQ).

This Rickettsia felis (strain ATCC VR-1525 / URRWXCal2) (Rickettsia azadi) protein is Putative ankyrin repeat protein RF_0266.